The sequence spans 647 residues: Golgi-associated RAB2B interactor protein 3 (647 aa).

Residues 188-202 (IPTADTSTETKSTLV) show a composition bias toward polar residues. 4 disordered regions span residues 188–220 (IPTADTSTETKSTLVSEIHGEGDRDSKFQTSQD), 267–296 (TAGAAGATGAAGATGAAGSARAAGGAGSAR), 361–384 (SKSPGSGQVATGLTGTASKDQERS), and 465–573 (RDGS…GFVS). Positions 205–214 (IHGEGDRDSK) are enriched in basic and acidic residues. Residues 361-378 (SKSPGSGQVATGLTGTAS) show a composition bias toward polar residues. Position 378 is a phosphoserine (serine 378). The segment covering 478–491 (TQKEKRERRESDRK) has biased composition (basic and acidic residues). Residues 492–501 (GSRKSSHHQR) show a composition bias toward basic residues. A Bipartite nuclear localization signal motif is present at residues 494 to 511 (RKSSHHQRTGASRHSSSK). A compositionally biased stretch (basic and acidic residues) spans 528–556 (KTREDKKEKGRGSLRDQRHSSSYRSESRT). Serine 634 and serine 636 each carry phosphoserine.

The protein belongs to the GARIN family. Interacts (via N-terminus) with RAB2B (in GTP-bound form). Interacts with FRG1.

The protein localises to the golgi apparatus. The protein resides in the nucleus. It is found in the cajal body. May be involved in RNA biogenesis. This Rattus norvegicus (Rat) protein is Golgi-associated RAB2B interactor protein 3 (Garin3).